The primary structure comprises 129 residues: Large ribosomal subunit protein bL20 (129 aa).

The protein belongs to the bacterial ribosomal protein bL20 family.

Binds directly to 23S ribosomal RNA and is necessary for the in vitro assembly process of the 50S ribosomal subunit. It is not involved in the protein synthesizing functions of that subunit. The protein is Large ribosomal subunit protein bL20 of Rhodococcus jostii (strain RHA1).